The following is a 126-amino-acid chain: Large ribosomal subunit protein bL12 (126 aa).

Belongs to the bacterial ribosomal protein bL12 family. In terms of assembly, homodimer. Part of the ribosomal stalk of the 50S ribosomal subunit. Forms a multimeric L10(L12)X complex, where L10 forms an elongated spine to which 2 to 4 L12 dimers bind in a sequential fashion. Binds GTP-bound translation factors.

Functionally, forms part of the ribosomal stalk which helps the ribosome interact with GTP-bound translation factors. Is thus essential for accurate translation. This is Large ribosomal subunit protein bL12 from Acidovorax sp. (strain JS42).